The chain runs to 428 residues: Adenylosuccinate synthetase (428 aa).

GTP contacts are provided by residues 12–18 (GDEGKGK) and 40–42 (GHT). The active-site Proton acceptor is D13. Positions 13 and 40 each coordinate Mg(2+). IMP contacts are provided by residues 13–16 (DEGK), 38–41 (NAGH), T128, R142, Q222, T237, and R301. The active-site Proton donor is the H41. 297–303 (TVTGRSR) is a binding site for substrate. Residues R303, 329–331 (KLD), and 411–413 (STS) contribute to the GTP site.

This sequence belongs to the adenylosuccinate synthetase family. In terms of assembly, homodimer. Requires Mg(2+) as cofactor.

It is found in the cytoplasm. The enzyme catalyses IMP + L-aspartate + GTP = N(6)-(1,2-dicarboxyethyl)-AMP + GDP + phosphate + 2 H(+). It participates in purine metabolism; AMP biosynthesis via de novo pathway; AMP from IMP: step 1/2. Its function is as follows. Plays an important role in the de novo pathway of purine nucleotide biosynthesis. Catalyzes the first committed step in the biosynthesis of AMP from IMP. In Phenylobacterium zucineum (strain HLK1), this protein is Adenylosuccinate synthetase.